The sequence spans 394 residues: Ribulose bisphosphate carboxylase large chain (394 aa).

K5 is modified (N6,N6,N6-trimethyllysine). Residues N114 and T164 each contribute to the substrate site. K166 acts as the Proton acceptor in catalysis. K168 provides a ligand contact to substrate. Mg(2+) contacts are provided by K192, D194, and E195. N6-carboxylysine is present on K192. Catalysis depends on H285, which acts as the Proton acceptor. R286, H318, and S370 together coordinate substrate.

It belongs to the RuBisCO large chain family. Type I subfamily. Heterohexadecamer of 8 large chains and 8 small chains. Mg(2+) is required as a cofactor.

The protein localises to the plastid. Its subcellular location is the chloroplast. The enzyme catalyses 2 (2R)-3-phosphoglycerate + 2 H(+) = D-ribulose 1,5-bisphosphate + CO2 + H2O. The catalysed reaction is D-ribulose 1,5-bisphosphate + O2 = 2-phosphoglycolate + (2R)-3-phosphoglycerate + 2 H(+). Functionally, ruBisCO catalyzes two reactions: the carboxylation of D-ribulose 1,5-bisphosphate, the primary event in carbon dioxide fixation, as well as the oxidative fragmentation of the pentose substrate in the photorespiration process. Both reactions occur simultaneously and in competition at the same active site. The chain is Ribulose bisphosphate carboxylase large chain (rbcL) from Nymphaea odorata (White water lily).